The chain runs to 374 residues: Queuine tRNA-ribosyltransferase (374 aa).

Asp-89 (proton acceptor) is an active-site residue. Residues 89 to 93 (DSGGF), Asp-143, Gln-187, and Gly-214 each bind substrate. The RNA binding stretch occupies residues 245–251 (GVGKPED). The active-site Nucleophile is the Asp-264. An RNA binding; important for wobble base 34 recognition region spans residues 269 to 273 (TRNAR). Cys-302, Cys-304, Cys-307, and His-333 together coordinate Zn(2+).

This sequence belongs to the queuine tRNA-ribosyltransferase family. In terms of assembly, homodimer. Within each dimer, one monomer is responsible for RNA recognition and catalysis, while the other monomer binds to the replacement base PreQ1. Requires Zn(2+) as cofactor.

It catalyses the reaction 7-aminomethyl-7-carbaguanine + guanosine(34) in tRNA = 7-aminomethyl-7-carbaguanosine(34) in tRNA + guanine. Its pathway is tRNA modification; tRNA-queuosine biosynthesis. In terms of biological role, catalyzes the base-exchange of a guanine (G) residue with the queuine precursor 7-aminomethyl-7-deazaguanine (PreQ1) at position 34 (anticodon wobble position) in tRNAs with GU(N) anticodons (tRNA-Asp, -Asn, -His and -Tyr). Catalysis occurs through a double-displacement mechanism. The nucleophile active site attacks the C1' of nucleotide 34 to detach the guanine base from the RNA, forming a covalent enzyme-RNA intermediate. The proton acceptor active site deprotonates the incoming PreQ1, allowing a nucleophilic attack on the C1' of the ribose to form the product. After dissociation, two additional enzymatic reactions on the tRNA convert PreQ1 to queuine (Q), resulting in the hypermodified nucleoside queuosine (7-(((4,5-cis-dihydroxy-2-cyclopenten-1-yl)amino)methyl)-7-deazaguanosine). In Psychromonas ingrahamii (strain DSM 17664 / CCUG 51855 / 37), this protein is Queuine tRNA-ribosyltransferase.